A 274-amino-acid polypeptide reads, in one-letter code: MAVISMKQLLEAGVHFGHQTRRWNPKMKTYIFGARNGIYIIDLQRTVRLFHTAYQFVTQTVGSGEHVLFVGTKQQARDTIAEEAQRCGMYYINQRWLGGMLTNFKTIKLRVDRLKELDAMVEDGSINRFPKKEILQLMGEREKLEKNLGGIKNMARLPGALYVVDTQRENIAVLEANRLGIPVVAIVDTNCDPDLINYPIPGNDDAIRAIRLITSKVADACAEGRRRLEETEQADHDKEFTALEEVPAGQILKDEASGPIVEIVNPVAEAEEEQ.

The protein belongs to the universal ribosomal protein uS2 family.

This Syntrophobacter fumaroxidans (strain DSM 10017 / MPOB) protein is Small ribosomal subunit protein uS2.